Consider the following 160-residue polypeptide: 2-C-methyl-D-erythritol 2,4-cyclodiphosphate synthase (160 aa).

Residues Asp9 and His11 each coordinate a divalent metal cation. 4-CDP-2-C-methyl-D-erythritol 2-phosphate contacts are provided by residues 9–11 (DVH) and 35–36 (HS). His43 contributes to the a divalent metal cation binding site. Residues 57–59 (DIG), 62–66 (FPDND), and Phe140 contribute to the 4-CDP-2-C-methyl-D-erythritol 2-phosphate site.

It belongs to the IspF family. In terms of assembly, homotrimer. The cofactor is a divalent metal cation.

It catalyses the reaction 4-CDP-2-C-methyl-D-erythritol 2-phosphate = 2-C-methyl-D-erythritol 2,4-cyclic diphosphate + CMP. It participates in isoprenoid biosynthesis; isopentenyl diphosphate biosynthesis via DXP pathway; isopentenyl diphosphate from 1-deoxy-D-xylulose 5-phosphate: step 4/6. Involved in the biosynthesis of isopentenyl diphosphate (IPP) and dimethylallyl diphosphate (DMAPP), two major building blocks of isoprenoid compounds. Catalyzes the conversion of 4-diphosphocytidyl-2-C-methyl-D-erythritol 2-phosphate (CDP-ME2P) to 2-C-methyl-D-erythritol 2,4-cyclodiphosphate (ME-CPP) with a corresponding release of cytidine 5-monophosphate (CMP). This is 2-C-methyl-D-erythritol 2,4-cyclodiphosphate synthase from Fusobacterium nucleatum subsp. nucleatum (strain ATCC 25586 / DSM 15643 / BCRC 10681 / CIP 101130 / JCM 8532 / KCTC 2640 / LMG 13131 / VPI 4355).